Reading from the N-terminus, the 258-residue chain is Regulatory protein RecX (258 aa).

This sequence belongs to the RecX family.

The protein localises to the cytoplasm. Functionally, modulates RecA activity. The polypeptide is Regulatory protein RecX (Streptococcus gordonii (strain Challis / ATCC 35105 / BCRC 15272 / CH1 / DL1 / V288)).